We begin with the raw amino-acid sequence, 109 residues long: MNAVFIVFLSAILSYPHESFAEELATKHKHVEHCLGSDGEGHPLNEFWYDDGMCQRFYCFRDDEGIIYEQITNCPIAIAEGDCKINPGTAGSYPDCCPTVICPDSPKAF.

An N-terminal signal peptide occupies residues 1-21; that stretch reads MNAVFIVFLSAILSYPHESFA.

This sequence belongs to the scoloptoxin-16 family. Contains 4 disulfide bonds. Expressed by the venom gland.

The protein localises to the secreted. The sequence is that of U-scoloptoxin(16)-Cw1a from Cormocephalus westwoodi (Westwood's green centipede).